Here is a 255-residue protein sequence, read N- to C-terminus: Ribonuclease HII (255 aa).

The region spanning 70 to 255 (DLVAGIDEVG…FEPVPEFLIK (186 aa)) is the RNase H type-2 domain. Residues D76, E77, and D168 each coordinate a divalent metal cation.

This sequence belongs to the RNase HII family. Mn(2+) serves as cofactor. The cofactor is Mg(2+).

It is found in the cytoplasm. It catalyses the reaction Endonucleolytic cleavage to 5'-phosphomonoester.. Its function is as follows. Endonuclease that specifically degrades the RNA of RNA-DNA hybrids. The protein is Ribonuclease HII of Pediococcus pentosaceus (strain ATCC 25745 / CCUG 21536 / LMG 10740 / 183-1w).